Reading from the N-terminus, the 81-residue chain is Photosystem I iron-sulfur center (81 aa).

4Fe-4S ferredoxin-type domains are found at residues Ser-2–Trp-31 and Gly-37–Tyr-68. The [4Fe-4S] cluster site is built by Cys-11, Cys-14, Cys-17, Cys-21, Cys-48, Cys-51, Cys-54, and Cys-58.

The cyanobacterial PSI reaction center is composed of one copy each of PsaA,B,C,D,E,F,I,J,K,L,M and X, and forms trimeric complexes. It depends on [4Fe-4S] cluster as a cofactor.

Its subcellular location is the cellular thylakoid membrane. The catalysed reaction is reduced [plastocyanin] + hnu + oxidized [2Fe-2S]-[ferredoxin] = oxidized [plastocyanin] + reduced [2Fe-2S]-[ferredoxin]. Apoprotein for the two 4Fe-4S centers FA and FB of photosystem I (PSI); essential for photochemical activity. FB is the terminal electron acceptor of PSI, donating electrons to ferredoxin. The C-terminus interacts with PsaA/B/D and helps assemble the protein into the PSI complex. Required for binding of PsaD and PsaE to PSI. PSI is a plastocyanin/cytochrome c6-ferredoxin oxidoreductase, converting photonic excitation into a charge separation, which transfers an electron from the donor P700 chlorophyll pair to the spectroscopically characterized acceptors A0, A1, FX, FA and FB in turn. In terms of biological role, mutant proteins with a 3Fe-4S center are not observed bound to PSI in vitro, and are probably not able to do so in vivo. The polypeptide is Photosystem I iron-sulfur center (psaC) (Picosynechococcus sp. (strain ATCC 27264 / PCC 7002 / PR-6) (Agmenellum quadruplicatum)).